The sequence spans 425 residues: Ribosome biogenesis protein WDR12 homolog (425 aa).

Residues 7–93 (IQAKFFTKDE…ETIVHLEYLE (87 aa)) form a ubiquitin-like (UBL) domain region. WD repeat units lie at residues 105-142 (IHDDWVSAVHASEAGILSGCYDNTLHIWDTATGTRRLT), 145-187 (GHLG…NAVE), 194-233 (GHARSVDCVDVSWNGAKFVTGSFDHMLKVWSADPDSTDTD), 265-303 (GHHEAVTGVQWTDEGEVATCSMDHTLRIWDVELGGMKSQ), 305-344 (AGSKAFLGISYSRLNRQIVSASSDRHVRLWDPRTKDGTIV), 350-390 (SHAG…APLY), and 394-425 (GHEDKVLAVDWSLGKYMISGGADNQLKIFEHK). The segment at 227-253 (PDSTDTDHGQDGSEEGSRKKQKTVDGK) is disordered. The segment covering 231–253 (DTDHGQDGSEEGSRKKQKTVDGK) has biased composition (basic and acidic residues).

This sequence belongs to the WD repeat WDR12/YTM1 family.

The protein resides in the nucleus. Its subcellular location is the nucleolus. It localises to the nucleoplasm. Its function is as follows. Required for maturation of ribosomal RNAs and formation of the large ribosomal subunit. In Ixodes scapularis (Black-legged tick), this protein is Ribosome biogenesis protein WDR12 homolog.